The following is a 355-amino-acid chain: Protein RecA (355 aa).

74-81 is an ATP binding site; that stretch reads GPESSGKT.

The protein belongs to the RecA family.

The protein localises to the cytoplasm. Its function is as follows. Can catalyze the hydrolysis of ATP in the presence of single-stranded DNA, the ATP-dependent uptake of single-stranded DNA by duplex DNA, and the ATP-dependent hybridization of homologous single-stranded DNAs. It interacts with LexA causing its activation and leading to its autocatalytic cleavage. The protein is Protein RecA of Cytophaga hutchinsonii (strain ATCC 33406 / DSM 1761 / CIP 103989 / NBRC 15051 / NCIMB 9469 / D465).